The sequence spans 67 residues: Large ribosomal subunit protein uL29 (67 aa).

Belongs to the universal ribosomal protein uL29 family.

In Exiguobacterium sp. (strain ATCC BAA-1283 / AT1b), this protein is Large ribosomal subunit protein uL29.